The chain runs to 231 residues: Phycobilisome rod-core linker polypeptide cpcG (231 aa).

In terms of domain architecture, PBS-linker spans 11–191; it reads STQNQRVDGY…PRYGADFKEK (181 aa).

Belongs to the phycobilisome linker protein family. The phycobilisome is a hemidiscoidal structure that is composed of two distinct substructures: a core complex and a number of rods radiating from the core.

Its subcellular location is the plastid. It is found in the chloroplast. It localises to the chloroplast thylakoid membrane. Rod-core linker protein required for attachment of phycocyanin to allophycocyanin in cores of phycobilisomes. Functionally, linker polypeptides determine the state of aggregation and the location of the disk-shaped phycobiliprotein units within the phycobilisome and modulate their spectroscopic properties in order to mediate a directed and optimal energy transfer. This is Phycobilisome rod-core linker polypeptide cpcG (cpcG) from Porphyra purpurea (Red seaweed).